A 160-amino-acid polypeptide reads, in one-letter code: Ribosomal RNA large subunit methyltransferase H (160 aa).

Residues Leu-76, Gly-108, and 127–132 (LGKLTW) contribute to the S-adenosyl-L-methionine site.

Belongs to the RNA methyltransferase RlmH family. As to quaternary structure, homodimer.

It is found in the cytoplasm. It carries out the reaction pseudouridine(1915) in 23S rRNA + S-adenosyl-L-methionine = N(3)-methylpseudouridine(1915) in 23S rRNA + S-adenosyl-L-homocysteine + H(+). Its function is as follows. Specifically methylates the pseudouridine at position 1915 (m3Psi1915) in 23S rRNA. The polypeptide is Ribosomal RNA large subunit methyltransferase H (Agrobacterium fabrum (strain C58 / ATCC 33970) (Agrobacterium tumefaciens (strain C58))).